A 520-amino-acid polypeptide reads, in one-letter code: MPKKKGKGKGKGKGKGKGKKDGKHDSKADRESEIEKLKSNASLWEAKFTVTDISRLEYREAARALAKANEELENQQYRAEKDTKDIIAFLKRTDFEKTATIAALEEELKRERAKSAQEKDLLVAEYMQKIDALEEMFRQRSGDFQRMQGELKTIKHYRKIKANLEEDLISIREKMYVDGRAHQESLARTEYKFYMARIRIEKEAEQKISQLAEQAHYEAVDQLGAASQTVITENIRLNEGLDYHVKEAEQLKRINVALTEKNSSLALFKETNELMKKEADSHVQSQHSEISELTAKLSTLEQALGIMSREFEQERVEMERSAGVNNTELEELEMLLAAREKELSKVKQLAQSIIEQRRELELFFHEALNHARKEIKAQQQHYRQEALKSYRWRMNEAHAGRLEFPRIRTFSNAPNSTNDVQTELEDSDKWNNLRSSNVDISDLTWEQKERLLNLLFAKLNGIKTRKAAHPPALSASSSEKIQVSSDAGSTVESPSMTFITQMTMANMTSDPFVLPALKST.

The segment covering 1 to 21 has biased composition (basic residues); it reads MPKKKGKGKGKGKGKGKGKKD. Positions 1–34 are disordered; that stretch reads MPKKKGKGKGKGKGKGKGKKDGKHDSKADRESEI. A compositionally biased stretch (basic and acidic residues) spans 22–34; the sequence is GKHDSKADRESEI. Coiled-coil stretches lie at residues 27-175 and 245-386; these read KADR…REKM and VKEA…RQEA. The disordered stretch occupies residues 468 to 492; the sequence is AHPPALSASSSEKIQVSSDAGSTVE. A compositionally biased stretch (low complexity) spans 469–478; it reads HPPALSASSS. Residues 479-492 are compositionally biased toward polar residues; sequence EKIQVSSDAGSTVE.

It belongs to the BBOF1 family.

It is found in the cytoplasm. It localises to the cytoskeleton. The protein resides in the cilium basal body. In terms of biological role, basal body protein required in multiciliate cells to align and maintain cilia orientation in response to flow. May act by mediating a maturation step that stabilizes and aligns cilia orientation. Not required to respond to planar cell polarity (PCP) or flow-based orientation cues. The sequence is that of Basal body-orientation factor 1 from Danio rerio (Zebrafish).